The sequence spans 982 residues: Coatomer subunit beta (982 aa).

HEAT repeat units follow at residues 16–53 (SGAP…NGEP), 130–167 (ELVE…RFPE), 241–278 (YDKG…SPTA), and 317–352 (LQDS…NQNS).

As to quaternary structure, oligomeric complex that consists of at least the alpha, beta, beta', gamma, delta, epsilon and zeta subunits.

Its subcellular location is the cytoplasm. It localises to the golgi apparatus membrane. The protein localises to the cytoplasmic vesicle. The protein resides in the COPI-coated vesicle membrane. The coatomer is a cytosolic protein complex that binds to dilysine motifs and reversibly associates with Golgi non-clathrin-coated vesicles, which further mediate biosynthetic protein transport from the ER, via the Golgi up to the trans Golgi network. Coatomer complex is required for budding from Golgi membranes, and is essential for the retrograde Golgi-to-ER transport of dilysine-tagged proteins. This chain is Coatomer subunit beta, found in Trypanosoma brucei brucei.